The sequence spans 264 residues: Probable aquaporin TIP3-1 (264 aa).

2 helical membrane passes run 28–48 and 62–82; these read AAISEFLATAIFVFAAEGSIL and GLVAVSLAHALALAVAVAVAV. The NPA 1 signature appears at 90 to 92; it reads NPA. 3 helical membrane passes run 105–125, 149–169, and 176–196; these read LIRALFYWLAQLLGAVVATLL, AVLLEATMTFGLMYAYYATVI, and VGTIAPLAVGFLLGANMLAGG. The NPA 2 motif lies at 204 to 206; it reads NPA. The chain crosses the membrane as a helical span at residues 224–244; it reads YWLGPFVGAGLAGLLYEYLVI.

It belongs to the MIP/aquaporin (TC 1.A.8) family. TIP (TC 1.A.8.10) subfamily. Expressed in leaves and at lower levels in roots.

It localises to the vacuole membrane. Its function is as follows. Aquaporins facilitate the transport of water and small neutral solutes across cell membranes. May be involved in transport from the vacuolar compartment to the cytoplasm. This Oryza sativa subsp. japonica (Rice) protein is Probable aquaporin TIP3-1 (TIP3-1).